The sequence spans 185 residues: Pyridoxal 5'-phosphate synthase subunit PdxT (185 aa).

46–48 (GES) provides a ligand contact to L-glutamine. The active-site Nucleophile is cysteine 75. Residues arginine 101 and 129–130 (IR) each bind L-glutamine. Catalysis depends on charge relay system residues histidine 165 and glutamate 167.

It belongs to the glutaminase PdxT/SNO family. In terms of assembly, in the presence of PdxS, forms a dodecamer of heterodimers. Only shows activity in the heterodimer.

It carries out the reaction aldehydo-D-ribose 5-phosphate + D-glyceraldehyde 3-phosphate + L-glutamine = pyridoxal 5'-phosphate + L-glutamate + phosphate + 3 H2O + H(+). The catalysed reaction is L-glutamine + H2O = L-glutamate + NH4(+). It functions in the pathway cofactor biosynthesis; pyridoxal 5'-phosphate biosynthesis. Its function is as follows. Catalyzes the hydrolysis of glutamine to glutamate and ammonia as part of the biosynthesis of pyridoxal 5'-phosphate. The resulting ammonia molecule is channeled to the active site of PdxS. This is Pyridoxal 5'-phosphate synthase subunit PdxT from Staphylococcus epidermidis (strain ATCC 12228 / FDA PCI 1200).